The following is a 236-amino-acid chain: THO complex subunit 7B (236 aa).

Residues 99–228 (EANLREKESF…IRSASEDQRN (130 aa)) are a coiled coil.

This sequence belongs to the THOC7 family. In terms of assembly, component of the THO complex, which is composed of THO1, THO2, THO3, THO5, THO6 and THO7.

It localises to the nucleus. In terms of biological role, acts as a component of the THO subcomplex of the TREX complex which is thought to couple mRNA transcription, processing and nuclear export. This Arabidopsis thaliana (Mouse-ear cress) protein is THO complex subunit 7B (THO7B).